Reading from the N-terminus, the 138-residue chain is UPF0201 protein PYRAB09730 (138 aa).

This sequence belongs to the UPF0201 family.

The protein is UPF0201 protein PYRAB09730 of Pyrococcus abyssi (strain GE5 / Orsay).